Consider the following 245-residue polypeptide: Octanoyltransferase (245 aa).

In terms of domain architecture, BPL/LPL catalytic spans 54–238 (GEATELVWLL…AFENIFGETR (185 aa)). Residues 92-99 (RGGQLTYH), 167-169 (AIG), and 180-182 (GIA) contribute to the substrate site. The active-site Acyl-thioester intermediate is Cys-198.

Belongs to the LipB family.

It localises to the cytoplasm. The enzyme catalyses octanoyl-[ACP] + L-lysyl-[protein] = N(6)-octanoyl-L-lysyl-[protein] + holo-[ACP] + H(+). It functions in the pathway protein modification; protein lipoylation via endogenous pathway; protein N(6)-(lipoyl)lysine from octanoyl-[acyl-carrier-protein]: step 1/2. Functionally, catalyzes the transfer of endogenously produced octanoic acid from octanoyl-acyl-carrier-protein onto the lipoyl domains of lipoate-dependent enzymes. Lipoyl-ACP can also act as a substrate although octanoyl-ACP is likely to be the physiological substrate. The chain is Octanoyltransferase from Rhodopseudomonas palustris (strain ATCC BAA-98 / CGA009).